Here is a 435-residue protein sequence, read N- to C-terminus: ATP-dependent protease ATPase subunit HslU (435 aa).

ATP contacts are provided by residues Val18, 60-65 (GVGKTE), Asp248, Glu313, and Arg385.

This sequence belongs to the ClpX chaperone family. HslU subfamily. As to quaternary structure, a double ring-shaped homohexamer of HslV is capped on each side by a ring-shaped HslU homohexamer. The assembly of the HslU/HslV complex is dependent on binding of ATP.

It is found in the cytoplasm. ATPase subunit of a proteasome-like degradation complex; this subunit has chaperone activity. The binding of ATP and its subsequent hydrolysis by HslU are essential for unfolding of protein substrates subsequently hydrolyzed by HslV. HslU recognizes the N-terminal part of its protein substrates and unfolds these before they are guided to HslV for hydrolysis. In Rhodospirillum rubrum (strain ATCC 11170 / ATH 1.1.1 / DSM 467 / LMG 4362 / NCIMB 8255 / S1), this protein is ATP-dependent protease ATPase subunit HslU.